A 397-amino-acid polypeptide reads, in one-letter code: Probable transport protein MmpL6 (397 aa).

Transmembrane regions (helical) follow at residues 190 to 210 (YDLL…MMII), 214 to 234 (LVAA…SFGL), 242 to 262 (LLGI…LLAV), 293 to 313 (TGGV…SFVF), and 328 to 348 (LGLL…IAVL).

The protein belongs to the resistance-nodulation-cell division (RND) (TC 2.A.6) family. MmpL subfamily.

It is found in the cell membrane. The protein is Probable transport protein MmpL6 (mmpL6) of Mycobacterium tuberculosis (strain CDC 1551 / Oshkosh).